Here is a 625-residue protein sequence, read N- to C-terminus: MRMLLIHSDYIEYEVKDKAIKNPEPISEEEKKGRMDEVLVAFISVEKVDEKNPDEVVEKAINEIIEVAKQVKAENLFVYPFAHLSSELAKPSVAQEVLRRIYEGLKERGYNVGKAPFGYYKAFRISCKGHPLAELSRTIVPEEAKVEEVPEALKKEETELVSYWYILTPEGELVEVDKFDFTGHENLRKFANYEIAKSRIADKEPPHVRLMLEHELVDYEPGSDPGNLRYYPKGRLIKSLLEQYVSEKVIEYGAMEVETPIMYDFEHPALEKYLNRFPARQYIVLSGDKRYFLRFAACFGQFMISKDATISYRNLPLRMYELTRYSFRREKRGELSGLRRLRAFTMPDMHTLAKDIEQAKDEFKKQFKLSMEVLGGVGLTPDDYEVAIRFTEDFWNEHKDFIIELVKLIGKPVLIEMWKQRFFYFILKFEFNFVDNLDKAAALSTVQIDVENAERFGITYYDENGEEKYPLILHCSPSGAIERVMYAILEKQAKLMQEGKKPMFPLWLSPIQVRVIPVSKEYLDYALYVAGKIEGARIRVDVDDEDERLSKKIRRAEKEWIPYIVVVGEKEKETGTITVRRREDGKQYETRIEELIKEIKQKTEGFPYKPRPLPLLLSQRPKFRG.

Positions 1-147 (MRMLLIHSDY…TIVPEEAKVE (147 aa)) are editing domain. The tract at residues 206–505 (PHVRLMLEHE…MQEGKKPMFP (300 aa)) is catalytic. Positions 298, 350, and 474 each coordinate Zn(2+).

Belongs to the class-II aminoacyl-tRNA synthetase family. As to quaternary structure, homodimer. Requires Zn(2+) as cofactor.

It is found in the cytoplasm. The enzyme catalyses tRNA(Thr) + L-threonine + ATP = L-threonyl-tRNA(Thr) + AMP + diphosphate + H(+). Catalyzes the attachment of threonine to tRNA(Thr) in a two-step reaction: L-threonine is first activated by ATP to form Thr-AMP and then transferred to the acceptor end of tRNA(Thr). Also edits incorrectly charged L-seryl-tRNA(Thr). The protein is Threonine--tRNA ligase of Pyrococcus furiosus (strain ATCC 43587 / DSM 3638 / JCM 8422 / Vc1).